The following is a 388-amino-acid chain: Transcription factor SOX-7 (388 aa).

Disordered regions lie at residues 20–46 (DAELSDGQSPPAVPRPPGDKGSESRIR) and 140–197 (RDQN…VDTY). 2 stretches are compositionally biased toward basic and acidic residues: residues 36-45 (PGDKGSESRI) and 146-164 (PEKRSGSRGALGEKEDRGE). The segment at residues 45–113 (IRRPMNAFMV…QHMQDYPNYK (69 aa)) is a DNA-binding region (HMG box). One can recognise a Sox C-terminal domain in the interval 268 to 388 (VSMMSPVPGC…ATYYNSYSVS (121 aa)).

Interacts with CTNNB1/beta-catenin; this interaction may lead to the proteasomal degradation of active CTNNB1 and thus inhibition of Wnt/beta-catenin-stimulated transcription. In terms of tissue distribution, widely expressed in adult and fetal tissues. Present both in mesenchymal and epithelial cells in some adult tissues, including colon. Tends to be down-regulated in prostate adenocarcinomas and colorectal tumors due to promoter hypermethylation.

It localises to the nucleus. The protein localises to the cytoplasm. In terms of biological role, binds to and activates the CDH5 promoter, hence plays a role in the transcriptional regulation of genes expressed in the hemogenic endothelium and blocks further differentiation into blood precursors. May be required for the survival of both hematopoietic and endothelial precursors during specification. Competes with GATA4 for binding and activation of the FGF3 promoter. Represses Wnt/beta-catenin-stimulated transcription, probably by targeting CTNNB1 to proteasomal degradation. Binds the DNA sequence 5'-AACAAT-3'. The chain is Transcription factor SOX-7 (SOX7) from Homo sapiens (Human).